The chain runs to 306 residues: Tyrosine recombinase XerD (306 aa).

The Core-binding (CB) domain maps to 1-83 (MGFIAQFLEM…TIKSYYEFLI (83 aa)). A Tyr recombinase domain is found at 104-299 (KLPEILSIAQ…QTNHLKKALL (196 aa)). Residues arginine 145, lysine 176, histidine 251, arginine 254, and histidine 277 contribute to the active site. Tyrosine 286 serves as the catalytic O-(3'-phospho-DNA)-tyrosine intermediate.

This sequence belongs to the 'phage' integrase family. XerD subfamily. In terms of assembly, forms a cyclic heterotetrameric complex composed of two molecules of XerC and two molecules of XerD.

The protein localises to the cytoplasm. Functionally, site-specific tyrosine recombinase, which acts by catalyzing the cutting and rejoining of the recombining DNA molecules. The XerC-XerD complex is essential to convert dimers of the bacterial chromosome into monomers to permit their segregation at cell division. It also contributes to the segregational stability of plasmids. This Rickettsia conorii (strain ATCC VR-613 / Malish 7) protein is Tyrosine recombinase XerD.